The following is a 396-amino-acid chain: 1-deoxy-D-xylulose 5-phosphate reductoisomerase (396 aa).

The NADPH site is built by threonine 13, glycine 14, serine 15, isoleucine 16, and asparagine 127. Lysine 128 is a binding site for 1-deoxy-D-xylulose 5-phosphate. Residue glutamate 129 coordinates NADPH. Aspartate 153 is a binding site for Mn(2+). 1-deoxy-D-xylulose 5-phosphate contacts are provided by serine 154, glutamate 155, serine 184, and histidine 207. Glutamate 155 serves as a coordination point for Mn(2+). Glycine 213 contributes to the NADPH binding site. 1-deoxy-D-xylulose 5-phosphate contacts are provided by serine 220, asparagine 225, lysine 226, and glutamate 229. Glutamate 229 provides a ligand contact to Mn(2+).

This sequence belongs to the DXR family. It depends on Mg(2+) as a cofactor. Mn(2+) is required as a cofactor.

It carries out the reaction 2-C-methyl-D-erythritol 4-phosphate + NADP(+) = 1-deoxy-D-xylulose 5-phosphate + NADPH + H(+). It functions in the pathway isoprenoid biosynthesis; isopentenyl diphosphate biosynthesis via DXP pathway; isopentenyl diphosphate from 1-deoxy-D-xylulose 5-phosphate: step 1/6. Functionally, catalyzes the NADPH-dependent rearrangement and reduction of 1-deoxy-D-xylulose-5-phosphate (DXP) to 2-C-methyl-D-erythritol 4-phosphate (MEP). The protein is 1-deoxy-D-xylulose 5-phosphate reductoisomerase of Pseudomonas paraeruginosa (strain DSM 24068 / PA7) (Pseudomonas aeruginosa (strain PA7)).